The primary structure comprises 152 residues: Deoxyuridine 5'-triphosphate nucleotidohydrolase (152 aa).

Substrate contacts are provided by residues 71-73 (RSG), asparagine 84, 88-90 (LID), and methionine 98.

The protein belongs to the dUTPase family. It depends on Mg(2+) as a cofactor.

The catalysed reaction is dUTP + H2O = dUMP + diphosphate + H(+). The protein operates within pyrimidine metabolism; dUMP biosynthesis; dUMP from dCTP (dUTP route): step 2/2. This enzyme is involved in nucleotide metabolism: it produces dUMP, the immediate precursor of thymidine nucleotides and it decreases the intracellular concentration of dUTP so that uracil cannot be incorporated into DNA. The polypeptide is Deoxyuridine 5'-triphosphate nucleotidohydrolase (Citrobacter koseri (strain ATCC BAA-895 / CDC 4225-83 / SGSC4696)).